A 602-amino-acid chain; its full sequence is Elongation factor 4 (602 aa).

The tr-type G domain occupies 7-189; sequence KHIRNFSIVA…AIVDKIPSPQ (183 aa). GTP is bound by residues 19-24 and 136-139; these read DHGKST and NKID.

It belongs to the TRAFAC class translation factor GTPase superfamily. Classic translation factor GTPase family. LepA subfamily.

It is found in the cell membrane. The enzyme catalyses GTP + H2O = GDP + phosphate + H(+). In terms of biological role, required for accurate and efficient protein synthesis under certain stress conditions. May act as a fidelity factor of the translation reaction, by catalyzing a one-codon backward translocation of tRNAs on improperly translocated ribosomes. Back-translocation proceeds from a post-translocation (POST) complex to a pre-translocation (PRE) complex, thus giving elongation factor G a second chance to translocate the tRNAs correctly. Binds to ribosomes in a GTP-dependent manner. The polypeptide is Elongation factor 4 (Clostridium kluyveri (strain ATCC 8527 / DSM 555 / NBRC 12016 / NCIMB 10680 / K1)).